A 236-amino-acid chain; its full sequence is Small ribosomal subunit protein uS2c (236 aa).

This sequence belongs to the universal ribosomal protein uS2 family.

The protein resides in the plastid. It localises to the chloroplast. This Eucalyptus globulus subsp. globulus (Tasmanian blue gum) protein is Small ribosomal subunit protein uS2c (rps2).